Here is a 154-residue protein sequence, read N- to C-terminus: Stigma-specific STIG1-like protein 3 (154 aa).

The signal sequence occupies residues 1-23 (MGHRNTVLTILLTISIAIMVLIA).

Belongs to the STIG1 family.

The protein is Stigma-specific STIG1-like protein 3 of Arabidopsis thaliana (Mouse-ear cress).